Here is a 393-residue protein sequence, read N- to C-terminus: NAD(P)H-quinone oxidoreductase subunit H, chloroplastic (393 aa).

This sequence belongs to the complex I 49 kDa subunit family. NDH is composed of at least 16 different subunits, 5 of which are encoded in the nucleus.

It is found in the plastid. Its subcellular location is the chloroplast thylakoid membrane. It catalyses the reaction a plastoquinone + NADH + (n+1) H(+)(in) = a plastoquinol + NAD(+) + n H(+)(out). The catalysed reaction is a plastoquinone + NADPH + (n+1) H(+)(in) = a plastoquinol + NADP(+) + n H(+)(out). Functionally, NDH shuttles electrons from NAD(P)H:plastoquinone, via FMN and iron-sulfur (Fe-S) centers, to quinones in the photosynthetic chain and possibly in a chloroplast respiratory chain. The immediate electron acceptor for the enzyme in this species is believed to be plastoquinone. Couples the redox reaction to proton translocation, and thus conserves the redox energy in a proton gradient. This chain is NAD(P)H-quinone oxidoreductase subunit H, chloroplastic, found in Guizotia abyssinica (Niger).